Reading from the N-terminus, the 1770-residue chain is Transposon Ty2-LR1 Gag-Pol polyprotein (1770 aa).

Composition is skewed to polar residues over residues 1–11, 19–39, and 49–60; these read MESQQLHQNPH, ASVT…SASN, and KVNSQQETTPGT. 2 disordered regions span residues 1-86 and 359-453; these read MESQ…GQYQ and QHSE…LPDH. Positions 295 to 397 are RNA-binding; the sequence is ENNINVSDRL…SSKPRAAKAH (103 aa). The segment covering 369 to 381 has biased composition (low complexity); sequence TSPNTTNTKVTTR. Polar residues-rich tracts occupy residues 399 to 408 and 415 to 435; these read IATSSKFSRV and ESTV…GQQQ. The active-site For protease activity; shared with dimeric partner is the Asp-457. The tract at residues 579–636 is integrase-type zinc finger-like; it reads NVNKSKSVNKYPYPLIHRMLGHANFRSIQKSLKKNAVTYLKESDIEWSNASTYQCPDC. The Integrase catalytic domain occupies 656-831; the sequence is ESYEPFQYLH…AGLDITTILP (176 aa). Asp-667 and Asp-732 together coordinate Mg(2+). 4 disordered regions span residues 1005-1038, 1058-1135, 1146-1165, and 1170-1205; these read GGTI…MIDL, GTEE…KSSK, LPLP…VSKD, and HSRQ…TEIE. Polar residues-rich tracts occupy residues 1009 to 1024 and 1065 to 1082; these read ESDT…FTAR and QRNS…STPS. Over residues 1151–1165 the composition is skewed to basic and acidic residues; sequence LTHKSPTDTSDVSKD. The Bipartite nuclear localization signal signature appears at 1193–1227; the sequence is KKRSLEDNETEIEVSRDTWNNKNMRSLEPPRSKKR. Residues 1353–1491 enclose the Reverse transcriptase Ty1/copia-type domain; sequence NDYYITQLDI…DILGLEIKYQ (139 aa). The Mg(2+) site is built by Asp-1361, Asp-1442, Asp-1443, Asp-1625, Glu-1667, and Asp-1700. Residues 1625-1767 enclose the RNase H Ty1/copia-type domain; that stretch reads DASYGNQPYY…IKTFKLLTNK (143 aa).

In terms of assembly, the capsid protein forms a homotrimer, from which the VLPs are assembled. The protease is a homodimer, whose active site consists of two apposed aspartic acid residues. Initially, virus-like particles (VLPs) are composed of the structural unprocessed proteins Gag and Gag-Pol, and also contain the host initiator methionine tRNA (tRNA(i)-Met) which serves as a primer for minus-strand DNA synthesis, and a dimer of genomic Ty RNA. Processing of the polyproteins occurs within the particle and proceeds by an ordered pathway, called maturation. First, the protease (PR) is released by autocatalytic cleavage of the Gag-Pol polyprotein, and this cleavage is a prerequisite for subsequent processing at the remaining sites to release the mature structural and catalytic proteins. Maturation takes place prior to the RT reaction and is required to produce transposition-competent VLPs.

The protein resides in the cytoplasm. It localises to the nucleus. The catalysed reaction is DNA(n) + a 2'-deoxyribonucleoside 5'-triphosphate = DNA(n+1) + diphosphate. It carries out the reaction Endonucleolytic cleavage to 5'-phosphomonoester.. Its function is as follows. Capsid protein (CA) is the structural component of the virus-like particle (VLP), forming the shell that encapsulates the retrotransposons dimeric RNA genome. The particles are assembled from trimer-clustered units and there are holes in the capsid shells that allow for the diffusion of macromolecules. CA also has nucleocapsid-like chaperone activity, promoting primer tRNA(i)-Met annealing to the multipartite primer-binding site (PBS), dimerization of Ty2 RNA and initiation of reverse transcription. In terms of biological role, the aspartyl protease (PR) mediates the proteolytic cleavages of the Gag and Gag-Pol polyproteins after assembly of the VLP. Reverse transcriptase/ribonuclease H (RT) is a multifunctional enzyme that catalyzes the conversion of the retro-elements RNA genome into dsDNA within the VLP. The enzyme displays a DNA polymerase activity that can copy either DNA or RNA templates, and a ribonuclease H (RNase H) activity that cleaves the RNA strand of RNA-DNA heteroduplexes during plus-strand synthesis and hydrolyzes RNA primers. The conversion leads to a linear dsDNA copy of the retrotransposon that includes long terminal repeats (LTRs) at both ends. Functionally, integrase (IN) targets the VLP to the nucleus, where a subparticle preintegration complex (PIC) containing at least integrase and the newly synthesized dsDNA copy of the retrotransposon must transit the nuclear membrane. Once in the nucleus, integrase performs the integration of the dsDNA into the host genome. The chain is Transposon Ty2-LR1 Gag-Pol polyprotein (TY2B-LR1) from Saccharomyces cerevisiae (strain ATCC 204508 / S288c) (Baker's yeast).